Here is a 407-residue protein sequence, read N- to C-terminus: Argininosuccinate synthase (407 aa).

A10 to S18 lines the ATP pocket. L-citrulline-binding residues include Y88 and S93. G118 provides a ligand contact to ATP. Residues T120, N124, and D125 each contribute to the L-aspartate site. N124 provides a ligand contact to L-citrulline. Residues R128, S177, S186, E263, and Y275 each contribute to the L-citrulline site.

This sequence belongs to the argininosuccinate synthase family. Type 1 subfamily. As to quaternary structure, homotetramer.

Its subcellular location is the cytoplasm. The catalysed reaction is L-citrulline + L-aspartate + ATP = 2-(N(omega)-L-arginino)succinate + AMP + diphosphate + H(+). It participates in amino-acid biosynthesis; L-arginine biosynthesis; L-arginine from L-ornithine and carbamoyl phosphate: step 2/3. The polypeptide is Argininosuccinate synthase (Clostridium botulinum (strain Alaska E43 / Type E3)).